The sequence spans 91 residues: DNA-directed RNA polymerase subunit omega (91 aa).

This sequence belongs to the RNA polymerase subunit omega family. The RNAP catalytic core consists of 2 alpha, 1 beta, 1 beta' and 1 omega subunit. When a sigma factor is associated with the core the holoenzyme is formed, which can initiate transcription. The rRNA transcription and antitermination complex (rrnTAC) consists of RNAP, NusA, NusB, NusE (rpsJ), NusG, SubB, ribosomal protein S4, DNA and precursor rRNA; S4 is more flexible than other subunits.

The catalysed reaction is RNA(n) + a ribonucleoside 5'-triphosphate = RNA(n+1) + diphosphate. In terms of biological role, promotes RNA polymerase (RNAP) assembly. Latches the N- and C-terminal regions of the beta' subunit thereby facilitating its interaction with the beta and alpha subunits. Functionally, part of the processive rRNA transcription and antitermination complex (rrnTAC). The complex forms an RNA-chaperone ring around the RNA exit tunnel of RNAP. It supports rapid transcription and antitermination of rRNA operons, cotranscriptional rRNA folding, and annealing of distal rRNA regions to allow correct ribosome biogenesis. The chain is DNA-directed RNA polymerase subunit omega (rpoZ) from Escherichia coli (strain K12).